A 525-amino-acid polypeptide reads, in one-letter code: MRVFCVGLLLFSVTWAAPTFQPQTEKTKQSCVEEQRQEEKNKDNIGFHHLGKRINQELSSKENIVQERKKDLSLSEASENKGSSKSQNYFTNRQRLNKEYSISNKENTHNGLRMSIYPKSTGNKGFEDGDDAISKLHDQEEYGAALIRNNMQHIMGPVTAIKLLGEENKENTPRNVLNIIPASMNYAKAHSKDKKKPQRDSQAQKSPVKSKSTHRIQHNIDYLKHLSKVKKIPSDFEGSGYTDLQERGDNDISPFSGDGQPFKDIPGKGEATGPDLEGKDIQTGFAGPSEAESTHLDTKKPGYNEIPEREENGGNTIGTRDETAKEADAVDVSLVEGSNDIMGSTNFKELPGREGNRVDAGSQNAHQGKVEFHYPPAPSKEKRKEGSSDAAESTNYNEIPKNGKGSTRKGVDHSNRNQATLNEKQRFPSKGKSQGLPIPSRGLDNEIKNEMDSFNGPSHENIITHGRKYHYVPHRQNNSTRNKGMPQGKGSWGRQPHSNRRFSSRRRDDSSESSDSGSSSESDGD.

The first 17 residues, 1–17, serve as a signal peptide directing secretion; the sequence is MRVFCVGLLLFSVTWAA. Disordered stretches follow at residues 24–95, 187–216, and 237–525; these read TEKT…NRQR, AKAH…THRI, and EGSG…SDGD. Composition is skewed to basic and acidic residues over residues 25 to 46 and 64 to 73; these read EKTK…DNIG and IVQERKKDLS. Composition is skewed to polar residues over residues 75–95 and 200–210; these read SEAS…NRQR and DSQAQKSPVKS. The interval 242 to 264 is dentonin; the sequence is TDLQERGDNDISPFSGDGQPFKD. Residues 247–249 carry the Cell attachment site motif; that stretch reads RGD. S256 carries O-linked (Xyl...) (chondroitin sulfate) serine glycosylation. Composition is skewed to basic and acidic residues over residues 292–312 and 319–328; these read ESTH…REEN and TRDETAKEAD. 2 N-linked (GlcNAc...) asparagine glycosylation sites follow: N477 and N478. An ASARM motif; interaction with PHEX region spans residues 507–525; sequence RDDSSESSDSGSSSESDGD. Low complexity predominate over residues 513–525; sequence SSDSGSSSESDGD.

This sequence belongs to the PF07175/osteoregulin family. As to quaternary structure, interacts (via the ASARM motif) with PHEX; the interaction is zinc-dependent. Phosphorylated on serine residues in the ASARM motif (in vitro) by FAM20C; the phosphorylation is important for the inhibition of bone mineralization. In terms of processing, cleaved by CTSB/cathepsin B; the cleavage is blocked by metalloprotease PHEX. As to expression, detected in urine (at protein level). Expressed by osteoblasts. Expressed by stem cells in dental pulp. Expressed by mesenchymal cells in dental papilla and dental pulp. Expressed in teeth, specifically in decidious dentin. Expressed in ondotoblasts. Expressed in salivary glands. Secreted from oncogenic hypophosphatemic tumors.

The protein resides in the secreted. Its subcellular location is the extracellular space. It localises to the extracellular matrix. Promotes renal phosphate excretion and inhibits intestinal phosphate absorption. Promotes bone mineralization by osteoblasts and cartilage mineralization by chondrocytes. Regulates the mineralization of the extracellular matrix of the craniofacial complex, such as teeth, bone and cartilage. Promotes dental pulp stem cell proliferation and differentiation. This is Matrix extracellular phosphoglycoprotein (MEPE) from Homo sapiens (Human).